Here is a 1788-residue protein sequence, read N- to C-terminus: U3 small nucleolar RNA-associated protein 10 (1788 aa).

Residues 585–622 form an HEAT 1 repeat; that stretch reads LDFQAVVPYAIVALSDPAKKVRRAAAELVTVLGSFYET. A disordered region spans residues 884 to 905; the sequence is PATKRRRVGSSEKSVDSQSPAD. 6 HEAT repeats span residues 926-962, 1049-1086, 1257-1294, 1301-1339, 1703-1740, and 1744-1781; these read AKHP…LVLS, QTVK…AYEH, LSIA…SESI, EALL…KYGK, EHHK…RLGE, and QSLP…TLGE.

This sequence belongs to the HEATR1/UTP10 family. In terms of assembly, component of the ribosomal small subunit (SSU) processome.

The protein localises to the nucleus. It is found in the nucleolus. In terms of biological role, involved in nucleolar processing of pre-18S ribosomal RNA. Involved in ribosome biosynthesis. This Neurospora crassa (strain ATCC 24698 / 74-OR23-1A / CBS 708.71 / DSM 1257 / FGSC 987) protein is U3 small nucleolar RNA-associated protein 10 (rbg-5).